Here is a 188-residue protein sequence, read N- to C-terminus: Glutamyl endopeptidase 2 (188 aa).

A disulfide bridge links Cys-14 with Cys-34. Residues His-33, Asp-62, and Ser-143 each act as charge relay system in the active site. Cys-137 and Cys-163 are oxidised to a cystine.

Belongs to the peptidase S1 family. As to quaternary structure, monomer.

The enzyme catalyses Preferential cleavage: -Glu-|-Xaa- &gt;&gt; -Asp-|-Xaa-. Preference for Pro or Leu at P2 and Phe at P3. Cleavage of -Glu-|-Asp- and -Glu-|-Pro- bonds is slow.. Preferentially cleaves peptide bonds on the carboxyl-terminal side of glutamate. This is Glutamyl endopeptidase 2 (sprE) from Streptomyces griseus.